We begin with the raw amino-acid sequence, 490 residues long: Flap endonuclease 1 (490 aa).

The N-domain stretch occupies residues M1–R106. Mg(2+) is bound at residue D34. DNA-binding residues include R47 and R72. 5 residues coordinate Mg(2+): D88, E160, E162, D181, and D183. The I-domain stretch occupies residues L124–Y266. E160 is a DNA binding site. DNA is bound by residues G244 and D246. Position 246 (D246) interacts with Mg(2+). The segment at S351 to F359 is interaction with PCNA. Disordered regions lie at residues N364–C396 and S421–D490. The span at E430 to I442 shows a compositional bias: polar residues. Residues K443 to E454 show a composition bias toward basic and acidic residues. Positions S455 to P469 are enriched in polar residues.

It belongs to the XPG/RAD2 endonuclease family. FEN1 subfamily. In terms of assembly, interacts with PCNA. Three molecules of FEN1 bind to one PCNA trimer with each molecule binding to one PCNA monomer. PCNA stimulates the nuclease activity without altering cleavage specificity. Mg(2+) serves as cofactor. In terms of processing, phosphorylated. Phosphorylation upon DNA damage induces relocalization to the nuclear plasma.

The protein localises to the nucleus. Its subcellular location is the nucleolus. It is found in the nucleoplasm. The protein resides in the mitochondrion. Its function is as follows. Structure-specific nuclease with 5'-flap endonuclease and 5'-3' exonuclease activities involved in DNA replication and repair. During DNA replication, cleaves the 5'-overhanging flap structure that is generated by displacement synthesis when DNA polymerase encounters the 5'-end of a downstream Okazaki fragment. It enters the flap from the 5'-end and then tracks to cleave the flap base, leaving a nick for ligation. Also involved in the long patch base excision repair (LP-BER) pathway, by cleaving within the apurinic/apyrimidinic (AP) site-terminated flap. Acts as a genome stabilization factor that prevents flaps from equilibrating into structures that lead to duplications and deletions. Also possesses 5'-3' exonuclease activity on nicked or gapped double-stranded DNA, and exhibits RNase H activity. Also involved in replication and repair of rDNA and in repairing mitochondrial DNA. The sequence is that of Flap endonuclease 1 from Cryptosporidium parvum (strain Iowa II).